Here is a 389-residue protein sequence, read N- to C-terminus: 8-amino-7-oxononanoate synthase (389 aa).

Arg-23 contributes to the substrate binding site. 114-115 (GY) contacts pyridoxal 5'-phosphate. A substrate-binding site is contributed by His-139. Ser-185, His-213, and Thr-242 together coordinate pyridoxal 5'-phosphate. Residue Lys-245 is modified to N6-(pyridoxal phosphate)lysine. Position 357 (Thr-357) interacts with substrate.

This sequence belongs to the class-II pyridoxal-phosphate-dependent aminotransferase family. BioF subfamily. As to quaternary structure, homodimer. It depends on pyridoxal 5'-phosphate as a cofactor.

The catalysed reaction is 6-carboxyhexanoyl-[ACP] + L-alanine + H(+) = (8S)-8-amino-7-oxononanoate + holo-[ACP] + CO2. It functions in the pathway cofactor biosynthesis; biotin biosynthesis. Catalyzes the decarboxylative condensation of pimeloyl-[acyl-carrier protein] and L-alanine to produce 8-amino-7-oxononanoate (AON), [acyl-carrier protein], and carbon dioxide. This chain is 8-amino-7-oxononanoate synthase, found in Acidithiobacillus ferrooxidans (strain ATCC 23270 / DSM 14882 / CIP 104768 / NCIMB 8455) (Ferrobacillus ferrooxidans (strain ATCC 23270)).